The chain runs to 439 residues: Serine hydroxymethyltransferase (439 aa).

Residues 1–20 are disordered; sequence MNAPHRDETTASHRDDGFFT. (6S)-5,6,7,8-tetrahydrofolate contacts are provided by residues leucine 136 and 140–142; that span reads GHL. Lysine 245 carries the N6-(pyridoxal phosphate)lysine modification.

This sequence belongs to the SHMT family. Homodimer. Pyridoxal 5'-phosphate is required as a cofactor.

It localises to the cytoplasm. The catalysed reaction is (6R)-5,10-methylene-5,6,7,8-tetrahydrofolate + glycine + H2O = (6S)-5,6,7,8-tetrahydrofolate + L-serine. It participates in one-carbon metabolism; tetrahydrofolate interconversion. The protein operates within amino-acid biosynthesis; glycine biosynthesis; glycine from L-serine: step 1/1. Its function is as follows. Catalyzes the reversible interconversion of serine and glycine with tetrahydrofolate (THF) serving as the one-carbon carrier. This reaction serves as the major source of one-carbon groups required for the biosynthesis of purines, thymidylate, methionine, and other important biomolecules. Also exhibits THF-independent aldolase activity toward beta-hydroxyamino acids, producing glycine and aldehydes, via a retro-aldol mechanism. This Jannaschia sp. (strain CCS1) protein is Serine hydroxymethyltransferase.